The primary structure comprises 160 residues: UPF0260 protein GDI1595/Gdia_1801 (160 aa).

The protein belongs to the UPF0260 family.

The chain is UPF0260 protein GDI1595/Gdia_1801 from Gluconacetobacter diazotrophicus (strain ATCC 49037 / DSM 5601 / CCUG 37298 / CIP 103539 / LMG 7603 / PAl5).